Reading from the N-terminus, the 218-residue chain is Small ribosomal subunit protein mS34 (218 aa).

Positions K180–V218 are disordered. Over residues I196–R212 the composition is skewed to basic and acidic residues.

It belongs to the mitochondrion-specific ribosomal protein mS34 family. As to quaternary structure, component of the mitochondrial small ribosomal subunit (mt-SSU). Mature mammalian 55S mitochondrial ribosomes consist of a small (28S) and a large (39S) subunit. The 28S small subunit contains a 12S ribosomal RNA (12S mt-rRNA) and 30 different proteins. The 39S large subunit contains a 16S rRNA (16S mt-rRNA), a copy of mitochondrial valine transfer RNA (mt-tRNA(Val)), which plays an integral structural role, and 52 different proteins.

Its subcellular location is the mitochondrion. In terms of biological role, required for mitochondrial translation, plays a role in maintaining the stability of the small ribosomal subunit and the 12S rRNA that are required for mitoribosome formation. The sequence is that of Small ribosomal subunit protein mS34 (MRPS34) from Homo sapiens (Human).